Consider the following 1143-residue polypeptide: uncharacterized protein (1143 aa).

The N-terminal stretch at 1–20 (MKLLLLALILVLSNINLISG) is a signal peptide. Topologically, residues 21–1121 (NGLVWPHPRL…PAAGGEDSSA (1101 aa)) are extracellular. Positions 177–203 (NSGGSWSSGGSGNSGGGWSSGGSGNSG) are enriched in gly residues. Residues 177–1120 (NSGGSWSSGG…EPAAGGEDSS (944 aa)) form a disordered region. The segment covering 222–236 (SSGGWTSGSHSSGSW) has biased composition (low complexity). The segment covering 237-283 (SSGGGSGSSSGGQSSGSWSSGGGSSSGGHSSGSWSSGGGSSAGGGSS) has biased composition (gly residues). The span at 284–296 (SGSHSSGSWSSGG) shows a compositional bias: low complexity. Residues 297-330 (SSSGGQSSGSWSSGGGSSSGGQSSGSWSSGGGSS) are compositionally biased toward gly residues. Residues 331 to 368 (SGSHSSGSWSSGGSSSGSHSSGSWSSGGSSSSSGNSGW) are compositionally biased toward low complexity. Over residues 374 to 392 (GNTGGNTGGNTGGNTGGQS) the composition is skewed to gly residues. The span at 393 to 403 (SGNSGWMTASG) shows a compositional bias: low complexity. Gly residues-rich tracts occupy residues 404 to 418 (GNTGGNTGGNTGGQS) and 430 to 444 (GNTGGNTGGNTGGQS). Low complexity-rich tracts occupy residues 445-498 (SGSS…TSSG) and 506-541 (GSSSSGGNSGWLTSSGGNSGGSSSSGSNSGASSSGD). 6 stretches are compositionally biased toward gly residues: residues 555 to 573 (GNTGGNSGAATGGNSGGNS), 580 to 596 (GNSGGASSSGGNTGGNS), 604 to 622 (GNTGGNSGAATGGNSGGNS), 629 to 783 (GNSG…GGNS), 790 to 843 (GNSG…GGAS), and 851 to 905 (GNSG…GGNS). Low complexity predominate over residues 906–1059 (GAATGANSGA…GGNGASGAAN (154 aa)). A compositionally biased stretch (polar residues) spans 1062–1078 (SIVTPNDQNVSPLSNSD). A compositionally biased stretch (low complexity) spans 1094-1114 (PTSRAPTVTPTPTSSAEEPAA). Residues 1122 to 1142 (ISKYSIQSFGIFVLSMIIYLV) traverse the membrane as a helical segment. Ile-1143 is a topological domain (cytoplasmic).

The protein localises to the membrane. This is an uncharacterized protein from Dictyostelium discoideum (Social amoeba).